Consider the following 129-residue polypeptide: Ribosome-binding factor A (129 aa).

The protein belongs to the RbfA family. As to quaternary structure, monomer. Binds 30S ribosomal subunits, but not 50S ribosomal subunits or 70S ribosomes.

Its subcellular location is the cytoplasm. Its function is as follows. One of several proteins that assist in the late maturation steps of the functional core of the 30S ribosomal subunit. Associates with free 30S ribosomal subunits (but not with 30S subunits that are part of 70S ribosomes or polysomes). Required for efficient processing of 16S rRNA. May interact with the 5'-terminal helix region of 16S rRNA. This is Ribosome-binding factor A from Ectopseudomonas mendocina (strain ymp) (Pseudomonas mendocina).